A 568-amino-acid chain; its full sequence is MASFHSHSPSPPAALSPDDAPQPRRPSRTSLHDAAAAAAPALSPESPGHELEDGADSSEFNADDVPVEVLVKHLLAAKQSLSSMTLVLRANDLATSARQMHQEFVILSAQTAFLRHGILQELHILHQLRRGMARAYDNGTRDFKHIIRTLDTADGRLEKIMQVLRKTTVENVFRQPGEEPKCLLDFVDPKIVEQVRDALKESIHELSAAKTSFDGDLLRFDTDLRTLTDAMAAAASLANPTTTTPDGYPPDQRSIPNLLSALSEGSHLMAEHLSSLTRHFDMCVTAVRTTEGGAALARRRAAEATSSDEDQAPVSISGVISAQESESGPSAFEPMDPLERQELLHVVMRDAAEVDDVVADIHNVLQQMEMDHASLHSLFSASRASHAATLTCFSMLEEVGARASSYVAAEAEFMQRWEDEKETIDENVSKMDELKKFYEGFLNAYGGLLLEVERRRAVEGKIDSIWRKAKEQVDKLVEADKREREHFRLEVGDYVPADLWGVVDRPLGRWAVVPLEDTREGSYEMEAHGEPENEGKVETAYERETEPSTPTPRKMPLNGPGSAGERPF.

Disordered regions lie at residues 1–59 (MASF…DSSE) and 522–568 (SYEM…ERPF). A compositionally biased stretch (basic and acidic residues) spans 522–546 (SYEMEAHGEPENEGKVETAYERETE).

Belongs to the ATG17 family.

The protein localises to the cytoplasm. Its subcellular location is the preautophagosomal structure membrane. Functionally, autophagy-specific protein that functions in response to autophagy-inducing signals as a scaffold to recruit other ATG proteins to organize pre-autophagosomal structure (PAS) formation. Modulates the timing and magnitude of the autophagy response, such as the size of the sequestering vesicles. Plays particularly a role in pexophagy and nucleophagy. The sequence is that of Autophagy-related protein 17 (apg-9) from Neurospora crassa (strain ATCC 24698 / 74-OR23-1A / CBS 708.71 / DSM 1257 / FGSC 987).